Here is a 95-residue protein sequence, read N- to C-terminus: Protein TusB (95 aa).

The protein belongs to the DsrH/TusB family. In terms of assembly, heterohexamer, formed by a dimer of trimers. The hexameric TusBCD complex contains 2 copies each of TusB, TusC and TusD. The TusBCD complex interacts with TusE.

The protein localises to the cytoplasm. Its function is as follows. Part of a sulfur-relay system required for 2-thiolation of 5-methylaminomethyl-2-thiouridine (mnm(5)s(2)U) at tRNA wobble positions. In Buchnera aphidicola subsp. Schizaphis graminum (strain Sg), this protein is Protein TusB.